Consider the following 231-residue polypeptide: Orotate phosphoribosyltransferase (231 aa).

Residues Lys-27, 79–80 (YK), Arg-106, Lys-107, Lys-110, His-112, and 133–141 (DDVMTAGTA) contribute to the 5-phospho-alpha-D-ribose 1-diphosphate site. Residues Thr-137 and Arg-166 each coordinate orotate.

It belongs to the purine/pyrimidine phosphoribosyltransferase family. PyrE subfamily. Homodimer. The cofactor is Mg(2+).

The catalysed reaction is orotidine 5'-phosphate + diphosphate = orotate + 5-phospho-alpha-D-ribose 1-diphosphate. It participates in pyrimidine metabolism; UMP biosynthesis via de novo pathway; UMP from orotate: step 1/2. In terms of biological role, catalyzes the transfer of a ribosyl phosphate group from 5-phosphoribose 1-diphosphate to orotate, leading to the formation of orotidine monophosphate (OMP). This is Orotate phosphoribosyltransferase from Bifidobacterium adolescentis (strain ATCC 15703 / DSM 20083 / NCTC 11814 / E194a).